Reading from the N-terminus, the 644-residue chain is DNA gyrase subunit B (644 aa).

The Toprim domain maps to C429–P543. Mg(2+) contacts are provided by E435, D508, and D510.

It belongs to the type II topoisomerase GyrB family. In terms of assembly, heterotetramer, composed of two GyrA and two GyrB chains. In the heterotetramer, GyrA contains the active site tyrosine that forms a transient covalent intermediate with DNA, while GyrB binds cofactors and catalyzes ATP hydrolysis. Requires Mg(2+) as cofactor. Mn(2+) serves as cofactor. It depends on Ca(2+) as a cofactor.

The protein localises to the cytoplasm. It carries out the reaction ATP-dependent breakage, passage and rejoining of double-stranded DNA.. In terms of biological role, a type II topoisomerase that negatively supercoils closed circular double-stranded (ds) DNA in an ATP-dependent manner to modulate DNA topology and maintain chromosomes in an underwound state. Negative supercoiling favors strand separation, and DNA replication, transcription, recombination and repair, all of which involve strand separation. Also able to catalyze the interconversion of other topological isomers of dsDNA rings, including catenanes and knotted rings. Type II topoisomerases break and join 2 DNA strands simultaneously in an ATP-dependent manner. The protein is DNA gyrase subunit B of Staphylococcus aureus (strain MRSA252).